The sequence spans 956 residues: Endogenous retrovirus group K member 6 Pol protein (956 aa).

The Reverse transcriptase domain occupies 57 to 245 (LEKGHIEPSF…TPFHYLGMQI (189 aa)). An LPQG motif is present at residues 161–164 (LPQG). The YXDD signature appears at 195-198 (CIDD). Residues 460–590 (LENALTVFTD…ADLLVSSALI (131 aa)) form the RNase H type-1 domain. 4 residues coordinate Mg(2+): D469, E497, D517, and D582. An Integrase-type zinc finger spans residues 587–628 (SALIKAQELHALTHVNAAGLKNKFDVTWKQAKDIVQHCTQCQ). Positions 596, 600, 624, and 627 each coordinate Zn(2+). The Integrase catalytic domain maps to 642-803 (RGLCPNALWQ…TSAEQHLTGK (162 aa)). Positions 811-859 (KLIWWKDNKNKTWEIGKVITWGRGFACVSPGENQLPVWIPTRHLKFYNE) form a DNA-binding region, integrase-type. Residues 865-890 (KKSTSAETETSQSSTVDSQDEQNGDV) form a disordered region. Residues 869–879 (SAETETSQSST) show a composition bias toward low complexity.

Belongs to the beta type-B retroviral polymerase family. HERV class-II K(HML-2) pol subfamily. In terms of processing, cleavage sites that yield the mature proteins remain to be determined.

The enzyme catalyses DNA(n) + a 2'-deoxyribonucleoside 5'-triphosphate = DNA(n+1) + diphosphate. It carries out the reaction Endonucleolytic cleavage to 5'-phosphomonoester.. Its function is as follows. Early post-infection, the reverse transcriptase converts the viral RNA genome into double-stranded viral DNA. The RNase H domain of the reverse transcriptase performs two functions. It degrades the RNA template and specifically removes the RNA primer from the RNA/DNA hybrid. Following nuclear import, the integrase catalyzes the insertion of the linear, double-stranded viral DNA into the host cell chromosome. Endogenous Pol proteins may have kept, lost or modified their original function during evolution. This is Endogenous retrovirus group K member 6 Pol protein (ERVK-6) from Homo sapiens (Human).